The sequence spans 712 residues: Diacylglycerol kinase 2 (712 aa).

2 consecutive Phorbol-ester/DAG-type zinc fingers follow at residues 72–133 (HHQW…AKDC) and 145–208 (RHHW…GDAC). The DAGKc domain maps to 338-479 (PDARPLLVFI…RWSVKIVEES (142 aa)).

This sequence belongs to the eukaryotic diacylglycerol kinase family. As to quaternary structure, monomer. Expressed in rosette and cauline leaves, flowers, siliques and roots. Highly expressed in young leaves and at lower levels in older leaves. In young seedlings, expressed at the root-shoot junction zone and vascular bundles of the cotyledons. In older plants, expressed in root tip, central cylinder, root hair, leaf mesophyll cells and guard cells, sepals, filaments of the anthers, stigma, valves of young and early adult siliques and hilum of seeds.

It is found in the endoplasmic reticulum. It catalyses the reaction a 1,2-diacyl-sn-glycerol + ATP = a 1,2-diacyl-sn-glycero-3-phosphate + ADP + H(+). The enzyme catalyses 1-octadecanoyl-2-(5Z,8Z,11Z,14Z-eicosatetraenoyl)-sn-glycerol + ATP = 1-octadecanoyl-2-(5Z,8Z,11Z,14Z-eicosatetraenoyl)-sn-glycero-3-phosphate + ADP + H(+). The catalysed reaction is 1,2-di-(9Z-octadecenoyl)-sn-glycerol + ATP = 1,2-di-(9Z-octadecenoyl)-sn-glycero-3-phosphate + ADP + H(+). Functionally, phosphorylates the second messenger diacylglycerol (DAG) to generate phosphatidic acid (PA), another important signaling molecule. PA is required for plant development and responses to abiotic stress and pathogen attack. May be involved in the accumulation of PA during cold stress. Involved in response to freezing stress by modulating the accumulation of PA. Exhibits high specificity for the unsaturated DAG analogs 1-stearoyl-2-arachidonoyl-sn-glycerol (1,2-SAG) and 1,2-dioleoyl-sn-glycerol (1,2-DOG). Exhibits high specificity for 1-palmitoyl, 2-oleoyl-sn-glycerol (1,2 POG), 1-stearoyl, 2-linoleoyl-sn-glycerol (1,2-SLG) and 1-oleoyl, 2-palmitoyl-sn-glycerol (1,2-OPG). Has almost no activity toward 1,2-dioctanoyl-sn-glycerol (1,2-DOCG), 1,2-dipalmitoyl-sn-glycerol (1,2-DPG), 1,2-dimyristoyl-sn-glycerol (1,2-DMG) and 1-oleoyl-2-acetyl-sn-glycerol (1,2-OAG). Functions together with DGK4 in male gametophyte development and biosynthesis of phosphatidylglycerol and phosphatidylinositol in the endoplasmic reticulum (ER). Involved in PA production for pollen grain growth, as well as leaf and root growth. The chain is Diacylglycerol kinase 2 from Arabidopsis thaliana (Mouse-ear cress).